The primary structure comprises 1150 residues: PAN2-PAN3 deadenylation complex catalytic subunit pan2 (1150 aa).

2 WD repeats span residues 96-139 (AHEE…DKLH) and 270-309 (ANVS…HFNE). The tract at residues 310–446 (MSKEAEFGDV…GAKINGETDD (137 aa)) is linker. Residues 447–816 (DPLLKYSNVE…IPCVLAYQVQ (370 aa)) form the USP domain. The 179-residue stretch at 865 to 1043 (VALDTEFVDL…IEDARMALRL (179 aa)) folds into the Exonuclease domain. A divalent metal cation contacts are provided by D868, E870, D977, and D1036. The disordered stretch occupies residues 1074-1150 (PPPRNGVPTV…GDFFSGSPLK (77 aa)). Polar residues predominate over residues 1091-1106 (VTMQNNSGRNTPSTSD). Low complexity predominate over residues 1108–1120 (AGAAASAPATPRQ).

This sequence belongs to the peptidase C19 family. PAN2 subfamily. As to quaternary structure, forms a heterotrimer with an asymmetric homodimer of the regulatory subunit pan3 to form the poly(A)-nuclease (PAN) deadenylation complex. A divalent metal cation is required as a cofactor.

It localises to the cytoplasm. The catalysed reaction is Exonucleolytic cleavage of poly(A) to 5'-AMP.. Positively regulated by the regulatory subunit pan3. In terms of biological role, catalytic subunit of the poly(A)-nuclease (PAN) deadenylation complex, one of two cytoplasmic mRNA deadenylases involved in mRNA turnover. PAN specifically shortens poly(A) tails of RNA and the activity is stimulated by poly(A)-binding protein pab1. PAN deadenylation is followed by rapid degradation of the shortened mRNA tails by the CCR4-NOT complex. Deadenylated mRNAs are then degraded by two alternative mechanisms, namely exosome-mediated 3'-5' exonucleolytic degradation, or deadenylation-dependent mRNA decaping and subsequent 5'-3' exonucleolytic degradation by xrn1. May also be involved in post-transcriptional maturation of mRNA poly(A) tails. The chain is PAN2-PAN3 deadenylation complex catalytic subunit pan2 from Aspergillus niger (strain ATCC MYA-4892 / CBS 513.88 / FGSC A1513).